Here is a 545-residue protein sequence, read N- to C-terminus: MPDRTALPRAMLAAWVLLLLAACSQGPAPTPPASWGWQDASGERAIAPDEAYPELFQAVQENRLFSDQKHFVDALPLREPARIRADYLRERERPGFDLRAFVGRNFEESGSVETAPPEAGADLASHISDLWPALTRHYEQVPAHSSLLPLPKPYVVPGGRFREVYYWDSYFTMLGLAESGQHQRVRDMLDNFAYLIDTYGHIPNGNRSYYLSRSQPPFFAYMVDLQARREGDAAYRRYLPQLQKEYAYWMEGSAGLRPNEARLHVVKLADGSLLNRYWDNRDTPRQESFLEDRATAARAPQRPAGEVYRDLRAGAESGWDFSSRWLDDGRELASIRTTAIVPVDLNALLYHLERIIAKACASSALKACEQGYGARAEKRRQAIEDHLWHPAGYYADYDWQRRRPIERINAASLFPLFTGLASAERAGRTADSVAAQLLRPGGLATTTRASGQQWDEPNGWAPLQWVAVQGLRAYGRDALAEDIGRRFLAQVQQVYDREGKLVEKYDISGNQGGGGGGEYPLQDGFGWSNGVTLQLLRLYGPGAGR.

The first 30 residues, 1–30 (MPDRTALPRAMLAAWVLLLLAACSQGPAPT), serve as a signal peptide directing secretion. Substrate contacts are provided by residues R160, 167–168 (WD), N204, 213–215 (RSQ), 285–287 (RQE), and G318. Active-site proton donor/acceptor residues include D320 and E503. E518 provides a ligand contact to substrate.

This sequence belongs to the glycosyl hydrolase 37 family.

It localises to the periplasm. The enzyme catalyses alpha,alpha-trehalose + H2O = alpha-D-glucose + beta-D-glucose. Functionally, provides the cells with the ability to utilize trehalose at high osmolarity by splitting it into glucose molecules that can subsequently be taken up by the phosphotransferase-mediated uptake system. This chain is Periplasmic trehalase, found in Pseudomonas aeruginosa (strain ATCC 15692 / DSM 22644 / CIP 104116 / JCM 14847 / LMG 12228 / 1C / PRS 101 / PAO1).